Reading from the N-terminus, the 169-residue chain is MATSSTVLFLLLAVFAASASAATFTITNNCGYTVWPAAIPVGGGQQLDQGQTWTLNVPAGTNSGRIWGRTGCSFNGGSGSCQTGDCAGALSCTLSGQPATLAEFSIGGEHDYYDISVIDVYNLAMDFSCSTGDALQCRDSSCPDAYHQPDDPKTHSCNTNSNYQITFCP.

The first 21 residues, M1–A21, serve as a signal peptide directing secretion.

Belongs to the thaumatin family.

In terms of biological role, associated with resistance against stem rust fungi. In Avena sativa (Oat), this protein is Thaumatin-like pathogenesis-related protein 4 (RASTL-4).